The primary structure comprises 333 residues: Olfactory receptor 9S13 (333 aa).

Topologically, residues Met-1–Phe-35 are extracellular. Asn-8 is a glycosylation site (N-linked (GlcNAc...) asparagine). A helical transmembrane segment spans residues Ala-36–Ile-56. Over Thr-57–Asn-72 the chain is Cytoplasmic. The chain crosses the membrane as a helical span at residues Leu-73–Leu-93. The Extracellular segment spans residues Ser-94–Thr-106. The cysteines at positions 104 and 196 are disulfide-linked. The chain crosses the membrane as a helical span at residues Gln-107–Tyr-127. The Cytoplasmic portion of the chain corresponds to Asp-128 to Arg-150. A helical membrane pass occupies residues Leu-151–Phe-171. At Gln-172 to Glu-203 the chain is on the extracellular side. Residues Leu-204–Ser-224 form a helical membrane-spanning segment. Residues Tyr-225–His-251 are Cytoplasmic-facing. The helical transmembrane segment at Leu-252–Leu-272 threads the bilayer. At Thr-273–Gly-278 the chain is on the extracellular side. Residues Lys-279 to Leu-299 form a helical membrane-spanning segment. Residues Arg-300 to Val-333 are Cytoplasmic-facing.

This sequence belongs to the G-protein coupled receptor 1 family.

The protein localises to the cell membrane. Odorant receptor. This Mus musculus (Mouse) protein is Olfactory receptor 9S13.